The sequence spans 268 residues: Ribonuclease P protein subunit p30 (268 aa).

Residue alanine 2 is modified to N-acetylalanine. The interval lysine 247–glycine 268 is disordered. Phosphoserine is present on serine 251.

It belongs to the eukaryotic/archaeal RNase P protein component 3 family. As to quaternary structure, component of nuclear RNase P and RNase MRP ribonucleoproteins. RNase P consists of a catalytic RNA moiety and about 10 protein subunits; POP1, POP4, POP5, POP7, RPP14, RPP21, RPP25, RPP30, RPP38 and RPP40. Within the RNase P complex, POP1, POP7 and RPP25 form the 'finger' subcomplex, POP5, RPP14, RPP40 and homodimeric RPP30 form the 'palm' subcomplex, and RPP21, POP4 and RPP38 form the 'wrist' subcomplex. All subunits of the RNase P complex interact with the catalytic RNA. Several subunits of RNase P are also part of the RNase MRP complex. RNase MRP consists of a catalytic RNA moiety and about 8 protein subunits; POP1, POP7, RPP25, RPP30, RPP38, RPP40 and possibly also POP4 and POP5.

It is found in the nucleus. The protein resides in the nucleolus. In terms of biological role, component of ribonuclease P, a ribonucleoprotein complex that generates mature tRNA molecules by cleaving their 5'-ends. Also a component of the MRP ribonuclease complex, which cleaves pre-rRNA sequences. The polypeptide is Ribonuclease P protein subunit p30 (RPP30) (Homo sapiens (Human)).